Reading from the N-terminus, the 74-residue chain is Protein kish-B (74 aa).

The first 22 residues, Met1–Ala22, serve as a signal peptide directing secretion. The Extracellular portion of the chain corresponds to Tyr23 to Gly52. The helical transmembrane segment at Thr53–Leu73 threads the bilayer. Lys74 is a topological domain (cytoplasmic).

The protein belongs to the KISH family.

It is found in the golgi apparatus membrane. Its function is as follows. Involved in the early part of the secretory pathway. The protein is Protein kish-B (tmem167b) of Danio rerio (Zebrafish).